Consider the following 201-residue polypeptide: Cell division protein SepF (201 aa).

Over residues V27–R38 the composition is skewed to basic and acidic residues. The interval V27 to R99 is disordered. Composition is skewed to polar residues over residues Q43–S54 and D82–I92.

It belongs to the SepF family. Homodimer. Interacts with FtsZ.

Its subcellular location is the cytoplasm. In terms of biological role, cell division protein that is part of the divisome complex and is recruited early to the Z-ring. Probably stimulates Z-ring formation, perhaps through the cross-linking of FtsZ protofilaments. Its function overlaps with FtsA. The sequence is that of Cell division protein SepF from Streptococcus agalactiae serotype III (strain NEM316).